Reading from the N-terminus, the 614-residue chain is Glucosidase 2 subunit beta (614 aa).

An N-terminal signal peptide occupies residues 1-19 (MGLHAILLLLLLRISASAA). A glycan (N-linked (GlcNAc...) asparagine) is linked at asparagine 115. 3 stretches are compositionally biased toward basic and acidic residues: residues 194–222 (EEER…KKAS), 231–272 (QENH…HDPE), and 324–351 (TGEK…HSEE). The segment at 194 to 396 (EEERLRKEKE…SHESDDEYVD (203 aa)) is disordered. A compositionally biased stretch (acidic residues) spans 352 to 364 (THEDESDVPESAE). Residues 372-382 (SEVEDDRHKYD) show a composition bias toward basic and acidic residues. Residues 383 to 396 (DEDFSHESDDEYVD) are compositionally biased toward acidic residues. Residues 497 to 592 (DQCFESKEGK…VLSTPALCDE (96 aa)) enclose the MRH domain. 3 disulfide bridges follow: cysteine 499/cysteine 512, cysteine 549/cysteine 578, and cysteine 563/cysteine 590.

Heterodimer of a catalytic alpha subunit and a beta subunit.

It localises to the endoplasmic reticulum. It functions in the pathway glycan metabolism; N-glycan metabolism. In terms of biological role, regulatory subunit of glucosidase II. May be required for defense response elicited by pathogen-associated molecular patterns (PAMPs). This chain is Glucosidase 2 subunit beta, found in Oryza sativa subsp. japonica (Rice).